The chain runs to 184 residues: Photosystem I assembly protein Ycf4 (184 aa).

A run of 2 helical transmembrane segments spans residues 22–42 (FCWA…GTSS) and 57–77 (ILFF…LFIS).

It belongs to the Ycf4 family.

The protein localises to the plastid. It localises to the chloroplast thylakoid membrane. In terms of biological role, seems to be required for the assembly of the photosystem I complex. In Chloranthus spicatus (Chulantree), this protein is Photosystem I assembly protein Ycf4.